The sequence spans 220 residues: Octanoyltransferase (220 aa).

The BPL/LPL catalytic domain occupies Gly31–Met211. Substrate is bound by residues Arg76–His83, Ala143–Gly145, and Gly156–Ala158. The Acyl-thioester intermediate role is filled by Cys174.

Belongs to the LipB family.

The protein resides in the cytoplasm. The catalysed reaction is octanoyl-[ACP] + L-lysyl-[protein] = N(6)-octanoyl-L-lysyl-[protein] + holo-[ACP] + H(+). The protein operates within protein modification; protein lipoylation via endogenous pathway; protein N(6)-(lipoyl)lysine from octanoyl-[acyl-carrier-protein]: step 1/2. Functionally, catalyzes the transfer of endogenously produced octanoic acid from octanoyl-acyl-carrier-protein onto the lipoyl domains of lipoate-dependent enzymes. Lipoyl-ACP can also act as a substrate although octanoyl-ACP is likely to be the physiological substrate. The polypeptide is Octanoyltransferase (Solibacter usitatus (strain Ellin6076)).